The sequence spans 684 residues: Pseudohemocyanin-1 (684 aa).

An N-terminal signal peptide occupies residues S1–R23. The interval A7 to A32 is disordered. N-linked (GlcNAc...) asparagine glycans are attached at residues N100, N193, N230, and N626.

This sequence belongs to the tyrosinase family. Hemocyanin subfamily. As to quaternary structure, hexamer. In terms of tissue distribution, strongly expressed in ovaries. Also expressed in heart. Not detected in hepatopancreas, gills, connective tissue or muscle.

Its function is as follows. Does not function as a hemocyanin. The polypeptide is Pseudohemocyanin-1 (Homarus americanus (American lobster)).